A 559-amino-acid polypeptide reads, in one-letter code: BTB/POZ domain-containing protein At5g47800 (559 aa).

In terms of domain architecture, BTB spans 28-96; it reads NDLVIRINNT…CYDITINLSA (69 aa). In terms of domain architecture, NPH3 spans 199-476; sequence DWWTEDISDL…VQALFFDQES (278 aa). Tyr417 carries the post-translational modification Phosphotyrosine. Residues 477 to 489 show a composition bias toward low complexity; it reads GSKGASSRSESQE. Disordered stretches follow at residues 477 to 502 and 524 to 559; these read GSKGASSRSESQELFTRGKETPTDEH and EGCKRGEEKTRSSTDPKKIVWKGTGSEHKHHISRDR. Basic and acidic residues-rich tracts occupy residues 492–502 and 524–541; these read TRGKETPTDEH and EGCKRGEEKTRSSTDPKK.

This sequence belongs to the NPH3 family.

Its pathway is protein modification; protein ubiquitination. May act as a substrate-specific adapter of an E3 ubiquitin-protein ligase complex (CUL3-RBX1-BTB) which mediates the ubiquitination and subsequent proteasomal degradation of target proteins. The sequence is that of BTB/POZ domain-containing protein At5g47800 from Arabidopsis thaliana (Mouse-ear cress).